Consider the following 242-residue polypeptide: uncharacterized protein (242 aa).

It is found in the cytoplasm. Its subcellular location is the nucleus. This is an uncharacterized protein from Schizosaccharomyces pombe (strain 972 / ATCC 24843) (Fission yeast).